The primary structure comprises 187 residues: Probable nicotinate-nucleotide adenylyltransferase (187 aa).

It belongs to the NadD family.

The catalysed reaction is nicotinate beta-D-ribonucleotide + ATP + H(+) = deamido-NAD(+) + diphosphate. It functions in the pathway cofactor biosynthesis; NAD(+) biosynthesis; deamido-NAD(+) from nicotinate D-ribonucleotide: step 1/1. In terms of biological role, catalyzes the reversible adenylation of nicotinate mononucleotide (NaMN) to nicotinic acid adenine dinucleotide (NaAD). The protein is Probable nicotinate-nucleotide adenylyltransferase of Anaeromyxobacter dehalogenans (strain 2CP-1 / ATCC BAA-258).